The primary structure comprises 599 residues: Bile salt-activated lipase (599 aa).

Positions 1–20 (MGRLEVLFLGLTCCLAAACA) are cleaved as a signal peptide. An intrachain disulfide couples Cys84 to Cys100. The N-linked (GlcNAc...) asparagine glycan is linked to Asn207. Catalysis depends on Ser214, which acts as the Acyl-ester intermediate. A disulfide bond links Cys266 and Cys277. Asn325 carries N-linked (GlcNAc...) asparagine glycosylation. Residues Asp340 and His455 each act as charge relay system in the active site. A disordered region spans residues 553–599 (TGDQDTLTPPEDDSEVAPDPPSDDSQVVPVPPTDDSVEAQMPATIGF). 3 repeat units span residues 559-569 (LTPPEDDSEVA), 570-580 (PDPPSDDSQVV), and 581-588 (PVPPTDDS). Residues 559–588 (LTPPEDDSEVAPDPPSDDSQVVPVPPTDDS) are 4 X 11 AA tandem repeats, O-glycosylated region.

This sequence belongs to the type-B carboxylesterase/lipase family. In terms of assembly, interacts with CLC. In terms of tissue distribution, EXpressed by eosinophils.

Its subcellular location is the secreted. It carries out the reaction a triacylglycerol + H2O = a diacylglycerol + a fatty acid + H(+). It catalyses the reaction 1,2,3-tri-(9Z-octadecenoyl)-glycerol + H2O = di-(9Z)-octadecenoylglycerol + (9Z)-octadecenoate + H(+). The enzyme catalyses 1,2,3-trioctanoylglycerol + H2O = dioctanoylglycerol + octanoate + H(+). The catalysed reaction is a sterol ester + H2O = a sterol + a fatty acid + H(+). It carries out the reaction an acetyl ester + H2O = an aliphatic alcohol + acetate + H(+). It catalyses the reaction a butanoate ester + H2O = an aliphatic alcohol + butanoate + H(+). The enzyme catalyses 9-hexadecanoyloxy-octadecanoate + H2O = 9-hydroxy-octadecanoate + hexadecanoate + H(+). The catalysed reaction is 9-(9Z-octadecenoyloxy)-octadecanoate + H2O = 9-hydroxy-octadecanoate + (9Z)-octadecenoate + H(+). It carries out the reaction cholesteryl (9Z-octadecenoate) + H2O = cholesterol + (9Z)-octadecenoate + H(+). It catalyses the reaction 1-hexadecanoyl-sn-glycero-3-phosphocholine + H2O = sn-glycerol 3-phosphocholine + hexadecanoate + H(+). The enzyme catalyses 12-hexadecanoyloxy-octadecanoate + H2O = 12-hydroxyoctadecanoate + hexadecanoate + H(+). The catalysed reaction is 12-(9Z-octadecenoyloxy)-octadecanoate + H2O = 12-hydroxyoctadecanoate + (9Z)-octadecenoate + H(+). It carries out the reaction 13-(9Z-octadecenoyloxy)-octadecanoate + H2O = 13-hydroxy-octadecanoate + (9Z)-octadecenoate + H(+). It catalyses the reaction 9-(9Z-hexadecenoyloxy)-octadecanoate + H2O = (9Z)-hexadecenoate + 9-hydroxy-octadecanoate + H(+). The enzyme catalyses 12-(9Z-hexadecenoyloxy)-octadecanoate + H2O = 12-hydroxyoctadecanoate + (9Z)-hexadecenoate + H(+). The catalysed reaction is 13-(9Z-hexadecenoyloxy)-octadecanoate + H2O = 13-hydroxy-octadecanoate + (9Z)-hexadecenoate + H(+). It carries out the reaction 12-octadecanoyloxy-octadecanoate + H2O = 12-hydroxyoctadecanoate + octadecanoate + H(+). It catalyses the reaction 13-octadecanoyloxy-octadecanoate + H2O = 13-hydroxy-octadecanoate + octadecanoate + H(+). The enzyme catalyses 5-(9Z-hexadecenoyloxy)-octadecanoate + H2O = 5-hydroxy-octadecanoate + (9Z)-hexadecenoate + H(+). The catalysed reaction is 9-octadecanoyloxy-octadecanoate + H2O = 9-hydroxy-octadecanoate + octadecanoate + H(+). Its activity is regulated as follows. Activated by bile salts such as sodium taurocholate. Its function is as follows. Catalyzes the hydrolysis of a wide range of substrates including cholesteryl esters, phospholipids, lysophospholipids, di- and tri-acylglycerols, and fatty acid esters of hydroxy fatty acids (FAHFAs). Preferentially hydrolyzes FAHFAs with the ester bond further away from the carboxylate. Unsaturated FAHFAs are hydrolyzed more quickly than saturated FAHFAs. Has an essential role in the complete digestion of dietary lipids and their intestinal absorption, along with the absorption of fat-soluble vitamins. The polypeptide is Bile salt-activated lipase (Cel) (Mus musculus (Mouse)).